The following is a 1144-amino-acid chain: MNNWQLSYQSPEDLTYHLKKPYLQYDKKEKQVTKVVFDTEANLIWAGDSYGRVSSYDPTYSLYTRHTAHIGSMPVVDLLSNKNGILSLSSDSLHFSNRRGVTQMSLTSADIAQLSDMKTMCYYTNNQNQVLCAGGNTASGIISVDLIKGTLASSTYFTSKVKHMSSNNKLVAIGKQAGSIDLFDPVSNRVIHSLSGHSASITSMDFKDNTLVTAGKSKTFGYLQSDQFINVYDVRIMKQLPPISFSKTPNFVGNHTSSKFPIGADFLQLHPVLPTVVAVASSSGSFDFIDLVNPSLRTPYIHPCKSISQFTLSPSGDYLAFLEEESMINMWNRSNSMSGFTNSAAVLEYQDYPEDSFIPYRVEVGQESYPLSSIGLPYYSETLLSAWPHTVFKTEGIISKKIEGSSSSETDNNSTKSVNRSLSHLSSSKYSLQPYNKFKYGPRNVIEPYKSLRERRKKMVSTTEDNQHRKELLEYKPSNNIDIPPAYSKLQMIYGKFGVMDFDFGGFNTTQYSGLETDIDCVYINEIIHLYRFVPEVYNFVVNCLEDEHIQEKSVLTELGFLFDMMTRANGKICRASNFVDVLESISTANELGLFTDEISTVSGHAGKPSLDEGNLSSHIYNLNLSVDADAEEIMKRSYGKYMTVAQKFNIFLLDRLISEEVERKLHSTDAIVLEELFGLNVDTEIHTLSTCGNFVRQPHLVSSLVVLSPASNNVKYSNKKLSNQTILPYIESSMCRFKQLTARCSKCEKLQNQEYESIVRNLPPLLSLNICLSPEEWTTAKTVNGWLSNHFFATISKDRPILKLQATDLKTSNAIFKYELMSYVARITDDFGEEHLVTYAKILDQKIQQYKWYMFNDFLVQEIDEDEALNISYWWKTPEIVVYSDAEEIRKPFVSVSKLKVDTDILYRDYFSEGIRKDVIRQYRLLTKDEAPGPGTLVALDAEFVSLTEPYLEINCKGMKTLLKPAKKSLARVSLLRGEGELEGVPFIDDYIINECHIEDYLTQFSGIEPGDLDPKLSKKSLVKRQVFYRKMWLLLQLGCVFVGHGLTNDFRQINIYVPESQIRDTSLYYLKGKRYLSLRYLAFAVLRKQVQTGNHDSIEDAHTALLLYRKYLELKEKGVFEMYLENIYDEGRKFGFKVPDTI.

WD repeat units follow at residues 27 to 66 (KKEK…YTRH), 153 to 193 (SSTY…VIHS), 196 to 233 (GHSA…NVYD), and 302 to 341 (HPCK…SGFT). The linker stretch occupies residues 344-481 (AAVLEYQDYP…LLEYKPSNNI (138 aa)). The USP domain maps to 482–887 (DIPPAYSKLQ…TPEIVVYSDA (406 aa)). The Exonuclease domain occupies 939 to 1110 (VALDAEFVSL…EDAHTALLLY (172 aa)). Positions 942, 944, 1051, and 1102 each coordinate a divalent metal cation.

Belongs to the peptidase C19 family. PAN2 subfamily. Forms a heterotrimer with an asymmetric homodimer of the regulatory subunit PAN3 to form the poly(A)-nuclease (PAN) deadenylation complex. The cofactor is a divalent metal cation.

The protein resides in the cytoplasm. The enzyme catalyses Exonucleolytic cleavage of poly(A) to 5'-AMP.. With respect to regulation, positively regulated by the regulatory subunit PAN3. In terms of biological role, catalytic subunit of the poly(A)-nuclease (PAN) deadenylation complex, one of two cytoplasmic mRNA deadenylases involved in mRNA turnover. PAN specifically shortens poly(A) tails of RNA and the activity is stimulated by poly(A)-binding protein PAB1. PAN deadenylation is followed by rapid degradation of the shortened mRNA tails by the CCR4-NOT complex. Deadenylated mRNAs are then degraded by two alternative mechanisms, namely exosome-mediated 3'-5' exonucleolytic degradation, or deadenylation-dependent mRNA decaping and subsequent 5'-3' exonucleolytic degradation by XRN1. May also be involved in post-transcriptional maturation of mRNA poly(A) tails. The chain is PAN2-PAN3 deadenylation complex catalytic subunit PAN2 from Kluyveromyces lactis (strain ATCC 8585 / CBS 2359 / DSM 70799 / NBRC 1267 / NRRL Y-1140 / WM37) (Yeast).